The sequence spans 794 residues: Phosphoribosylformylglycinamidine synthase subunit PurL (794 aa).

The active site involves His47. ATP contacts are provided by Tyr50 and Lys89. Position 91 (Glu91) interacts with Mg(2+). Residues 92–95 (SHNH) and Arg114 contribute to the substrate site. His93 (proton acceptor) is an active-site residue. Asp115 is a binding site for Mg(2+). Residue Gln238 coordinates substrate. Mg(2+) is bound at residue Asp266. Position 310 to 312 (310 to 312 (ESQ)) interacts with substrate. The ATP site is built by Asp522 and Gly559. Asn560 contributes to the Mg(2+) binding site. Ser562 provides a ligand contact to substrate.

Belongs to the FGAMS family. Monomer. Part of the FGAM synthase complex composed of 1 PurL, 1 PurQ and 2 PurS subunits.

It localises to the cytoplasm. It carries out the reaction N(2)-formyl-N(1)-(5-phospho-beta-D-ribosyl)glycinamide + L-glutamine + ATP + H2O = 2-formamido-N(1)-(5-O-phospho-beta-D-ribosyl)acetamidine + L-glutamate + ADP + phosphate + H(+). It participates in purine metabolism; IMP biosynthesis via de novo pathway; 5-amino-1-(5-phospho-D-ribosyl)imidazole from N(2)-formyl-N(1)-(5-phospho-D-ribosyl)glycinamide: step 1/2. Its function is as follows. Part of the phosphoribosylformylglycinamidine synthase complex involved in the purines biosynthetic pathway. Catalyzes the ATP-dependent conversion of formylglycinamide ribonucleotide (FGAR) and glutamine to yield formylglycinamidine ribonucleotide (FGAM) and glutamate. The FGAM synthase complex is composed of three subunits. PurQ produces an ammonia molecule by converting glutamine to glutamate. PurL transfers the ammonia molecule to FGAR to form FGAM in an ATP-dependent manner. PurS interacts with PurQ and PurL and is thought to assist in the transfer of the ammonia molecule from PurQ to PurL. The protein is Phosphoribosylformylglycinamidine synthase subunit PurL of Prochlorococcus marinus (strain MIT 9313).